Here is a 205-residue protein sequence, read N- to C-terminus: Beta-crystallin B2 (205 aa).

Ala-2 carries the post-translational modification N-acetylalanine. The segment at 2 to 16 (ASDHQSPATKQQQPS) is N-terminal arm. Beta/gamma crystallin 'Greek key' domains follow at residues 17–56 (SKIVLFEQENFQGRCHELSGPCTSLKEAGMEKIGSILVHS) and 57–101 (GPWV…RPIK). The connecting peptide stretch occupies residues 102 to 106 (VDSQE). 2 Beta/gamma crystallin 'Greek key' domains span residues 107–148 (HKIV…RVQS) and 149–191 (GTWV…RRIR). The C-terminal arm stretch occupies residues 193-205 (MQWHQRGTFHPTN).

This sequence belongs to the beta/gamma-crystallin family. Homo/heterodimer, or complexes of higher-order. The structure of beta-crystallin oligomers seems to be stabilized through interactions between the N-terminal arms. In terms of processing, the N-terminus is blocked.

Its function is as follows. Crystallins are the dominant structural components of the vertebrate eye lens. The sequence is that of Beta-crystallin B2 from Aquarana catesbeiana (American bullfrog).